Reading from the N-terminus, the 195-residue chain is Imidazoleglycerol-phosphate dehydratase (195 aa).

The protein belongs to the imidazoleglycerol-phosphate dehydratase family.

The protein localises to the cytoplasm. It catalyses the reaction D-erythro-1-(imidazol-4-yl)glycerol 3-phosphate = 3-(imidazol-4-yl)-2-oxopropyl phosphate + H2O. It functions in the pathway amino-acid biosynthesis; L-histidine biosynthesis; L-histidine from 5-phospho-alpha-D-ribose 1-diphosphate: step 6/9. This Geobacter sp. (strain M21) protein is Imidazoleglycerol-phosphate dehydratase.